The following is a 660-amino-acid chain: DNA mismatch repair protein MutL (660 aa).

Belongs to the DNA mismatch repair MutL/HexB family.

Functionally, this protein is involved in the repair of mismatches in DNA. It is required for dam-dependent methyl-directed DNA mismatch repair. May act as a 'molecular matchmaker', a protein that promotes the formation of a stable complex between two or more DNA-binding proteins in an ATP-dependent manner without itself being part of a final effector complex. In Solibacter usitatus (strain Ellin6076), this protein is DNA mismatch repair protein MutL.